The sequence spans 269 residues: Glutamate racemase (269 aa).

Substrate contacts are provided by residues 11-12 (DS) and 43-44 (YG). The Proton donor/acceptor role is filled by Cys-74. 75-76 (NT) is a binding site for substrate. Catalysis depends on Cys-185, which acts as the Proton donor/acceptor. Substrate is bound at residue 186–187 (TH).

This sequence belongs to the aspartate/glutamate racemases family.

The catalysed reaction is L-glutamate = D-glutamate. Its pathway is cell wall biogenesis; peptidoglycan biosynthesis. Functionally, provides the (R)-glutamate required for cell wall biosynthesis. This Bacillus cereus (strain ATCC 10987 / NRS 248) protein is Glutamate racemase.